Reading from the N-terminus, the 154-residue chain is Transcriptional repressor NrdR (154 aa).

Residues Cys-3–Cys-34 fold into a zinc finger. Positions Pro-49–Glu-139 constitute an ATP-cone domain.

Belongs to the NrdR family. Zn(2+) is required as a cofactor.

In terms of biological role, negatively regulates transcription of bacterial ribonucleotide reductase nrd genes and operons by binding to NrdR-boxes. In Pseudomonas fluorescens (strain Pf0-1), this protein is Transcriptional repressor NrdR.